The following is a 99-amino-acid chain: Secreted RxLR effector protein 94 (99 aa).

The short motif at 35 to 55 (RQLRQSANPSKAWHQWKSETR) is the RxLR-dEER element.

This sequence belongs to the RxLR effector family.

The protein localises to the secreted. Its subcellular location is the host nucleus. It is found in the host cytoplasm. Functionally, secreted effector that completely suppresses the host cell death induced by cell death-inducing proteins. This Plasmopara viticola (Downy mildew of grapevine) protein is Secreted RxLR effector protein 94.